Consider the following 1375-residue polypeptide: DNA-directed RNA polymerase subunit beta' (1375 aa).

Positions 1 to 158 (MAKNEVLSLP…RVNKIIQPIR (158 aa)) are unknown. The tract at residues 159-1353 (KTYGSKAFTH…GGLIPAGTGI (1195 aa)) is DNA-directed RNA polymerase subunit beta'. Positions 219, 221, 233, and 236 each coordinate Zn(2+). Mg(2+) is bound by residues Asp607, Asp609, and Asp611.

It belongs to the RNA polymerase beta' chain family. The RNAP catalytic core consists of 2 alpha, 1 beta, 1 beta' and 1 omega subunit. When a sigma factor is associated with the core the holoenzyme is formed, which can initiate transcription. Mg(2+) serves as cofactor. Requires Zn(2+) as cofactor.

It catalyses the reaction RNA(n) + a ribonucleoside 5'-triphosphate = RNA(n+1) + diphosphate. Functionally, DNA-dependent RNA polymerase catalyzes the transcription of DNA into RNA using the four ribonucleoside triphosphates as substrates. This is DNA-directed RNA polymerase subunit beta' from Acholeplasma laidlawii (strain PG-8A).